We begin with the raw amino-acid sequence, 259 residues long: Thiamine thiazole synthase (259 aa).

NAD(+)-binding positions include Ala33, 52 to 53, Gly60, Val124, and 152 to 154; these read ER and HVD. Fe cation is bound by residues Asp154 and His169. Position 219 (Met219) interacts with NAD(+). Arg229 is a glycine binding site.

It belongs to the THI4 family. Homooctamer; tetramer of dimers. Fe(2+) is required as a cofactor.

The enzyme catalyses hydrogen sulfide + glycine + NAD(+) = ADP-5-ethyl-4-methylthiazole-2-carboxylate + nicotinamide + 3 H2O + H(+). The protein operates within cofactor biosynthesis; thiamine diphosphate biosynthesis. Involved in the biosynthesis of the thiazole moiety of thiamine. Catalyzes the conversion of NAD and glycine to adenosine diphosphate 5-(2-hydroxyethyl)-4-methylthiazole-2-carboxylate (ADT), an adenylated thiazole intermediate, using free sulfide as a source of sulfur. In Pyrobaculum neutrophilum (strain DSM 2338 / JCM 9278 / NBRC 100436 / V24Sta) (Thermoproteus neutrophilus), this protein is Thiamine thiazole synthase.